A 587-amino-acid chain; its full sequence is 5-aminolevulinate synthase, erythroid-specific, mitochondrial (587 aa).

Residues 1–49 (MVTAAMLLQCCPVLARGPTSLLGKVVKTHQFLFGIGRCPILATQGPNCS) constitute a mitochondrion transit peptide. R163 is a binding site for succinyl-CoA. 2 residues coordinate pyridoxal 5'-phosphate: C258 and F259. S280 and K299 together coordinate succinyl-CoA. The pyridoxal 5'-phosphate site is built by S332, H360, and T388. The active site involves K391. K391 carries the N6-(pyridoxal phosphate)lysine modification. Pyridoxal 5'-phosphate contacts are provided by T420 and T421. Residue T508 participates in succinyl-CoA binding.

It belongs to the class-II pyridoxal-phosphate-dependent aminotransferase family. As to quaternary structure, homodimer. Interacts with SUCLA2. Interacts with SUCLA2. The cofactor is pyridoxal 5'-phosphate. As to expression, erythroid-specific.

It is found in the mitochondrion inner membrane. It catalyses the reaction succinyl-CoA + glycine + H(+) = 5-aminolevulinate + CO2 + CoA. It participates in porphyrin-containing compound metabolism; protoporphyrin-IX biosynthesis; 5-aminolevulinate from glycine: step 1/1. Its activity is regulated as follows. Down-regulated by itaconyl-CoA which acts as a competitive inhibitor of succinyl-CoA substrate. In terms of biological role, catalyzes the pyridoxal 5'-phosphate (PLP)-dependent condensation of succinyl-CoA and glycine to form aminolevulinic acid (ALA), with CoA and CO2 as by-products. Contributes significantly to heme formation during erythropoiesis. Functionally, catalyzes the pyridoxal 5'-phosphate (PLP)-dependent condensation of succinyl-CoA and glycine to form aminolevulinic acid (ALA), with CoA and CO2 as by-products. Catalytic activity is 75-85% of isoform 1 activity. Catalyzes the pyridoxal 5'-phosphate (PLP)-dependent condensation of succinyl-CoA and glycine to form aminolevulinic acid (ALA), with CoA and CO2 as by-products. Catalytic activity is 65-75% of isoform 1 activity. The sequence is that of 5-aminolevulinate synthase, erythroid-specific, mitochondrial from Homo sapiens (Human).